The following is a 156-amino-acid chain: Endogenous retrovirus group K member 6 Pro protein (156 aa).

Residues 21 to 96 form the Peptidase A2 domain; sequence FEGLVDTGAD…IPLNLWGRDL (76 aa). The active site involves Asp26. One can recognise a G-patch domain in the interval 111 to 156; it reads YSPTSQKIMTKMGYIPGKGLGKNEDGIKIPVEAKINQEREGIGNPC.

The protein belongs to the peptidase A2 family. HERV class-II K(HML-2) subfamily. Active as a homodimer. Post-translationally, autoproteolytically processed at the N-terminus. Expected C-terminal autoprocessing not detected. The sequence shown is that of the processed Pro protein.

The enzyme catalyses Processing at the authentic HIV-1 PR recognition site and release of the mature p17 matrix and the p24 capsid protein, as a result of the cleavage of the -SQNY-|-PIVQ- cleavage site.. Its function is as follows. Retroviral proteases have roles in the processing of the primary translation products and the maturation of the viral particle. Endogenous Pro proteins may have kept, lost or modified their original function during evolution. In Homo sapiens (Human), this protein is Endogenous retrovirus group K member 6 Pro protein (ERVK-6).